A 98-amino-acid polypeptide reads, in one-letter code: NADH-ubiquinone oxidoreductase chain 4L (98 aa).

A run of 3 helical transmembrane segments spans residues 1-21 (MPLIYMNITLAFTMSLLGMLV), 29-49 (SLLCLEGMMLSLFIMITLMTL), and 58-78 (IMPITMLVFAACEAAVGLALL).

This sequence belongs to the complex I subunit 4L family. As to quaternary structure, core subunit of respiratory chain NADH dehydrogenase (Complex I) which is composed of 45 different subunits.

The protein localises to the mitochondrion inner membrane. It carries out the reaction a ubiquinone + NADH + 5 H(+)(in) = a ubiquinol + NAD(+) + 4 H(+)(out). Functionally, core subunit of the mitochondrial membrane respiratory chain NADH dehydrogenase (Complex I) which catalyzes electron transfer from NADH through the respiratory chain, using ubiquinone as an electron acceptor. Part of the enzyme membrane arm which is embedded in the lipid bilayer and involved in proton translocation. The polypeptide is NADH-ubiquinone oxidoreductase chain 4L (MT-ND4L) (Pongo abelii (Sumatran orangutan)).